The primary structure comprises 355 residues: Inner membrane protein YghQ (355 aa).

The Periplasmic segment spans residues Met-1 to Leu-37. A helical membrane pass occupies residues Leu-38–Val-58. Topologically, residues Gln-59 to Ser-100 are cytoplasmic. A helical transmembrane segment spans residues Phe-101–Phe-121. Over Leu-122 to Trp-134 the chain is Periplasmic. The helical transmembrane segment at Leu-135 to Leu-155 threads the bilayer. Over Arg-156 to Ala-177 the chain is Cytoplasmic. The chain crosses the membrane as a helical span at residues Gly-178–Val-198. Over Ser-199 to Val-261 the chain is Periplasmic. The helical transmembrane segment at Leu-262 to Phe-282 threads the bilayer. Topologically, residues Asp-283–Gly-323 are cytoplasmic. A helical transmembrane segment spans residues Ile-324–Phe-344. Over Gly-345–Ile-355 the chain is Periplasmic.

The protein resides in the cell inner membrane. The polypeptide is Inner membrane protein YghQ (yghQ) (Escherichia coli (strain K12)).